The chain runs to 616 residues: Formin-binding protein 1 (616 aa).

The segment at 1-79 is required for self-association and induction of membrane tubulation; sequence MSWGTELWDQ…CKAFLSTLNE (79 aa). Residues 1–264 enclose the F-BAR domain; it reads MSWGTELWDQ…AAESIDQKND (264 aa). The tract at residues 1-334 is interaction with microtubules; the sequence is MSWGTELWDQ…KKNKLMSLLT (334 aa). N6-acetyllysine is present on residues Lys-66 and Lys-110. Residues 67–259 adopt a coiled-coil conformation; sequence YTACKAFLST…DGIVKAAESI (193 aa). Residues 251 to 616 form a required for self-association and induction of membrane tubulation region; sequence GIVKAAESID…VYLDKNAKGS (366 aa). 2 disordered regions span residues 280-314 and 332-366; these read GDIEFEDYTQPMKRTVSDNSLSSSKEGKPELRFGG and LLTSPHQPPPPPPASASPSAVPNGPQSPKQPKEPL. Ser-296 and Ser-299 each carry phosphoserine. Residues 337–346 are compositionally biased toward pro residues; it reads HQPPPPPPAS. A phosphoserine mark is found at Ser-348 and Ser-358. The stretch at 398–490 forms a coiled coil; that stretch reads PEDFSNFPPE…VEGRLPARSE (93 aa). The segment at 399-551 is interaction with RND2; that stretch reads EDFSNFPPEQ…FDDEEPLPAI (153 aa). The REM-1 domain occupies 403-480; the sequence is NFPPEQRRKK…AQKFEAWLAE (78 aa). Residues 487–531 are disordered; it reads ARSEQARRQSGLYDGQTHQTVTNCAQDRESPDGSYTEEQSQESEH. The interval 494-616 is interaction with PDE6G; sequence RQSGLYDGQT…VYLDKNAKGS (123 aa). Position 496 is a phosphoserine (Ser-496). Tyr-499 carries the phosphotyrosine modification. A compositionally biased stretch (polar residues) spans 502–511; it reads QTHQTVTNCA. The tract at residues 513–616 is required for interaction with TNKS; the sequence is DRESPDGSYT…VYLDKNAKGS (104 aa). Ser-520 bears the Phosphoserine mark. The interaction with DNM1 and DNM3 stretch occupies residues 534–616; that stretch reads LAPDFDDEFD…VYLDKNAKGS (83 aa). Positions 549-610 constitute an SH3 domain; sequence PAIGTCKALY…PTSYVEVYLD (62 aa). Residues 549-616 form an interaction with ARHGAP17, DAAM1, DIAPH1 and DIAPH2 region; it reads PAIGTCKALY…VYLDKNAKGS (68 aa). The interval 552–608 is interaction with DNM2 and WASL; sequence GTCKALYTFEGQNEGTISVVEGETLSVIEEDKGDGWTRIRRNEDEEGYVPTSYVEVY. Positions 552–609 are interaction with FASLG; the sequence is GTCKALYTFEGQNEGTISVVEGETLSVIEEDKGDGWTRIRRNEDEEGYVPTSYVEVYL.

The protein belongs to the FNBP1 family. As to quaternary structure, homodimerizes, the dimers can polymerize end-to-end to form filamentous structures. Interacts specifically with GTP-bound RND2 and CDC42. Interacts with AKAP9, ARHGAP17, DAAM1, DIAPH1, DIAPH2, DNM1, DNM2, DNM3, FASLG/FASL, microtubules, PDE6G, SNX2 and WASL/N-WASP. May interact with TNKS. Expressed in brain and testis.

The protein resides in the cytoplasm. It localises to the cytoskeleton. Its subcellular location is the cell cortex. The protein localises to the lysosome. It is found in the cytoplasmic vesicle. The protein resides in the cell membrane. It localises to the membrane. Its subcellular location is the clathrin-coated pit. Its function is as follows. Required to coordinate membrane tubulation with reorganization of the actin cytoskeleton during the late stage of clathrin-mediated endocytosis. Binds to lipids such as phosphatidylinositol 4,5-bisphosphate and phosphatidylserine and promotes membrane invagination and the formation of tubules. Also enhances actin polymerization via the recruitment of WASL/N-WASP, which in turn activates the Arp2/3 complex. Actin polymerization may promote the fission of membrane tubules to form endocytic vesicles. May act as a link between RND2 signaling and regulation of the actin cytoskeleton. May be required for the lysosomal retention of FASLG/FASL. In Mus musculus (Mouse), this protein is Formin-binding protein 1 (Fnbp1).